The primary structure comprises 134 residues: Small ribosomal subunit protein eS24A (134 aa).

At Ser-2 the chain carries N-acetylserine. The interval 100–134 (IQKVARQQRKQRKNRGKKVFGTGKRLAKRKSKQQD) is disordered. 2 stretches are compositionally biased toward basic residues: residues 105 to 117 (RQQR…RGKK) and 124 to 134 (RLAKRKSKQQD).

Belongs to the eukaryotic ribosomal protein eS24 family. In terms of assembly, component of the small ribosomal subunit (SSU). Mature yeast ribosomes consist of a small (40S) and a large (60S) subunit. The 40S small subunit contains 1 molecule of ribosomal RNA (18S rRNA) and at least 33 different proteins. The large 60S subunit contains 3 rRNA molecules (25S, 5.8S and 5S rRNA) and at least 46 different proteins.

The protein localises to the cytoplasm. Its function is as follows. Component of the ribosome, a large ribonucleoprotein complex responsible for the synthesis of proteins in the cell. The small ribosomal subunit (SSU) binds messenger RNAs (mRNAs) and translates the encoded message by selecting cognate aminoacyl-transfer RNA (tRNA) molecules. The large subunit (LSU) contains the ribosomal catalytic site termed the peptidyl transferase center (PTC), which catalyzes the formation of peptide bonds, thereby polymerizing the amino acids delivered by tRNAs into a polypeptide chain. The nascent polypeptides leave the ribosome through a tunnel in the LSU and interact with protein factors that function in enzymatic processing, targeting, and the membrane insertion of nascent chains at the exit of the ribosomal tunnel. The sequence is that of Small ribosomal subunit protein eS24A (rps2401) from Schizosaccharomyces pombe (strain 972 / ATCC 24843) (Fission yeast).